A 758-amino-acid polypeptide reads, in one-letter code: Vitamin K-dependent gamma-carboxylase (758 aa).

The interval 1 to 21 (MAVSARSARTSPGSDKVQKDK) is disordered. The residue at position 2 (alanine 2) is an N-acetylalanine. Over 2 to 60 (AVSARSARTSPGSDKVQKDKAELISGPRQDSLMGKLLGFEWTDLSSWRRLVTLLNRPTD) the chain is Cytoplasmic. Residues 61–81 (PASLAVFRFLFGFLMVLDIPQ) traverse the membrane as a helical segment. The Lumenal portion of the chain corresponds to 82–113 (ERGLSSLDRKYLDGLDVCRFPLLDALRPLPLD). Cysteine 99 and cysteine 450 form a disulfide bridge. Residues 114–134 (WMYLVYTIMFLGALGMMLGLC) traverse the membrane as a helical segment. The Cytoplasmic segment spans residues 135 to 136 (YR). A helical transmembrane segment spans residues 137–157 (ISCVLFLLPYWYVFLLDKTSW). Residues 158–292 (NNHSYLYGLL…VSYFHCMNSQ (135 aa)) are Lumenal-facing. A helical transmembrane segment spans residues 293–313 (LFSIGMFSYVMLASSPLFCSP). Residues 314-361 (EWPRKLVSYCPQRLQELLPLKAAPQPSVSCVYKRSRGKSGQKPGLRHQ) are Cytoplasmic-facing. The helical transmembrane segment at 362–382 (LGAAFTLLYLLEQLFLPYSHF) threads the bilayer. At 383-758 (LTQGYNNWTN…SNPDPVHSEF (376 aa)) the chain is on the lumenal side. The disordered stretch occupies residues 732-758 (GELSPSNMDSSHSNPPESNPDPVHSEF). Residues 735 to 747 (SPSNMDSSHSNPP) show a composition bias toward polar residues.

This sequence belongs to the vitamin K-dependent gamma-carboxylase family. In terms of assembly, monomer. May interact with CALU.

It localises to the endoplasmic reticulum membrane. It carries out the reaction 4-carboxy-L-glutamyl-[protein] + 2,3-epoxyphylloquinone + H2O + H(+) = phylloquinol + L-glutamyl-[protein] + CO2 + O2. Functionally, mediates the vitamin K-dependent carboxylation of glutamate residues to calcium-binding gamma-carboxyglutamate (Gla) residues with the concomitant conversion of the reduced hydroquinone form of vitamin K to vitamin K epoxide. Catalyzes gamma-carboxylation of various proteins, such as blood coagulation factors (F2, F7, F9 and F10), osteocalcin (BGLAP) or matrix Gla protein (MGP). This chain is Vitamin K-dependent gamma-carboxylase (GGCX), found in Pongo abelii (Sumatran orangutan).